A 60-amino-acid chain; its full sequence is Cytotoxin 1 (60 aa).

4 disulfide bridges follow: C3–C21, C14–C38, C42–C53, and C54–C59.

This sequence belongs to the three-finger toxin family. Short-chain subfamily. Type IA cytotoxin sub-subfamily. Monomer in solution; Homodimer and oligomer in the presence of negatively charged lipids forming a pore with a size ranging between 20 and 30 Angstroms. As to expression, expressed by the venom gland.

It is found in the secreted. Its subcellular location is the target cell membrane. In terms of biological role, shows cytolytic activity on many different cells by forming pore in lipid membranes. In vivo, increases heart rate or kills the animal by cardiac arrest. In addition, it binds to heparin with high affinity, interacts with Kv channel-interacting protein 1 (KCNIP1) in a calcium-independent manner, and binds to integrin alpha-V/beta-3 (ITGAV/ITGB3) with moderate affinity. The protein is Cytotoxin 1 of Naja melanoleuca (Forest cobra).